Here is a 450-residue protein sequence, read N- to C-terminus: Cysteine protease ATG4C (450 aa).

The active-site Nucleophile is cysteine 112. Catalysis depends on residues aspartate 336 and histidine 338.

It belongs to the peptidase C54 family.

Its subcellular location is the cytoplasm. The catalysed reaction is [protein]-C-terminal L-amino acid-glycyl-phosphatidylethanolamide + H2O = [protein]-C-terminal L-amino acid-glycine + a 1,2-diacyl-sn-glycero-3-phosphoethanolamine. Its function is as follows. Cysteine protease that plays a key role in autophagy by mediating both proteolytic activation and delipidation of ATG8 family proteins. The protease activity is required for proteolytic activation of ATG8 family proteins: cleaves the C-terminal amino acid of ATG8 proteins to reveal a C-terminal glycine. Exposure of the glycine at the C-terminus is essential for ATG8 proteins conjugation to phosphatidylethanolamine (PE) and insertion to membranes, which is necessary for autophagy. In addition to the protease activity, also mediates delipidation of ATG8 family proteins. Catalyzes delipidation of PE-conjugated forms of ATG8 proteins during macroautophagy. The sequence is that of Cysteine protease ATG4C from Xenopus laevis (African clawed frog).